A 2057-amino-acid polypeptide reads, in one-letter code: MRNQFPFRSVYYKIINSVLAAGLYYGFLSAFSIKTSHLLLLRTLVFEEEEETKKRIVAKTGLIMGQILLFISIYYKPFHIALTRPRTITALGFFYLFFQIFWKSQKRVFANQNSMSNLSCIFLNHLILQQLLNTCILPSSAARRLVSIYTFRSNNKMLFVTSSFFAWFIGQILVCEFFELAGKHIRIELAGKHIGKNRSIRSIIRSDYFHFFFVILFFMMSLHSFGRIPSPILLPKMSNLSQIEKRALILKGTDEEEENDKIDEEIEQEMEKLEQEIEEIEQQRKLANHLKKKKDRQKKQGTRGHSDKEFHSNSNTSYSKRKIEVLKSEIRVIQEKERKSLISPLLFDYRRWYRPFRYIQNNRLEQAIRNEMSQYFFDTQQSDGKERISFTYPRSLSTFFKVIKRKINILLEKTLSNQLDNAWVSRNKKKMNHLKNDFFNRINHLDKEKIDGEIEQEKEREQKAVEILETRTRLCIEDDTTKQEYYLPQMYDPFLNGPYRGKIKKELPPSIIKNTLIADSRETGEQNRLHDLLLPNSNYENFDQNTNTLEIGDILEIDAFSSIVIHKISKKVPRWSYKLISELEQLSFHYSPPAEHEIRSRRAVGEYLLFDPTETHTTTKATDKETKPNASKETDTVNKETKPNASKETDTIDKETKTNASKETNTVDKETKTNASKETDTVDKETKPNASKETDTIDKETKTNASKETNTVNKETKPNASKETDTVDKETKTNASKETDTVNKETKTNASKETDTVDKETKPNASKETDTVNKETKTNASKETDTVNKETKTKTPEEEAKEDEEKGLVLMRYAHQPDFKHGLIKGSMRTQRRKIVIEKLFQANAHSPLFFDRIKKKKLFSFAIPRPVQLNRIFRNWSAGKGFRILESTDEQTKREEKPKRESKKKNDRVKEKKRLEIGETWDTFEITQMLRGCILIAQSSLRKNLILPSLIIGKNLGRMLLLQIPEWSEDFEEWNREKHIKCTYTGNPVSETEFPENWLTQGIQIKIVYPFHLKPWHTSKPLTSRDDVCFLTIFGRETELPFGSPRKTPSFFEPILKELEKKIGKYEKVTAESVLKKIIIKLFKKVSKETRTTNQNLPFIEKDLSKGKPILLFRSREIGGMEKEKDSRISNQIIDESFSQIQKIQIPDWTNSSLIETKMQDMTDRTSTIKNQIERITEEKKKVTLELDISTYKKSCRLELSKKIWQIVKLKNIICKFHYFRKFFIQRIYNDICLSTIHICQTNTQLFVESTKNLIEKYISKNETNKKIINKKTKNTIHFISNIKTYTYNSCKKNSEIFCDLSNLSQAYVFYKISQTGVVNLSKLRSVLQHHGTSFFLKTQMKDSFRTQGIFQSEVIHKKLQRSITSQWKNWLRGNYQYDLSQIIWSSLMSQKQKWRNRVNRYCRSQKKDLKKWNSCGKYQLSHYKKKKGPNSLSNQKDNFQKCYRYDLLSYKSINNENKGDSVFYRSIPQVTKRQAVSDNYNMSQNSLFAITGSIPINIFIGRIERVYIPYIEKNLNRKYFNWENIYFDLRKKVAIESWVAVNPSSNQKTRIGTNNFQLIDPIDKEEEEEINPSSNQKTPIGTNKDEIFYAIDKEEEEEINPEEEINPEEEINPEEEINPSSNQKTPIGTNNDQLIDPIEKQEKDPFYIPINQNPEINQPNSPNSFFDWMGMNEQILNRPISNLELWFFPEFVRLFNVYKTKPWIIPSKLLLLNSNLSETDNKKKNIAENQNLEEEDSAKSDMKKGTKKSKTNSEKKSKTNSEKKSETDSEKKSETDSEKKSETDSEKKSETDSEKKSETDSEKKSETDSEKKSLSTRELRELFMKKYFLLQLRWDQRNIGQNIRKNVRILALPKSSINLETMTLSCIERRKLQLNVMWKSKSNLSILKFFKSIGMVVDRLGLSVKNNGQFLMYQTIGISLVHKSKNKTNQQYRKQRIIRARENNHFDALVLENILSSRRRRELRILICFNSNNWNDVDTNSVFFNENGVKNCSHFWEERNLRDKEKNELIQFKFFLWPNYRLEDLACMNRYWFDTNNGSRFSILRIHMYLPLKIR.

4 helical membrane-spanning segments follow: residues 13 to 33 (KIIN…AFSI), 62 to 82 (LIMG…HIAL), 158 to 178 (LFVT…CEFF), and 206 to 226 (SDYF…HSFG). Residues 248 to 340 (LILKGTDEEE…RVIQEKERKS (93 aa)) adopt a coiled-coil conformation. Basic residues predominate over residues 288 to 302 (NHLKKKKDRQKKQGT). 5 disordered regions span residues 288-316 (NHLK…NSNT), 614-807 (ETHT…EEKG), 890-910 (DEQT…NDRV), 1597-1634 (EEEE…TNND), and 1724-1817 (KKKN…KSLS). 2 stretches are compositionally biased toward basic and acidic residues: residues 621–657 (ATDK…KETK) and 665–702 (NTVD…KETK). Polar residues predominate over residues 704 to 713 (NASKETNTVN). Composition is skewed to basic and acidic residues over residues 714–807 (KETK…EEKG) and 891–900 (EQTKREEKPK). The segment covering 1597–1619 (EEEEINPEEEINPEEEINPEEEI) has biased composition (acidic residues). Positions 1622 to 1634 (SSNQKTPIGTNND) are enriched in polar residues. Over residues 1753-1817 (TNSEKKSKTN…ETDSEKKSLS (65 aa)) the composition is skewed to basic and acidic residues.

Belongs to the TIC214 family. Part of the Tic complex.

Its subcellular location is the plastid. It localises to the chloroplast inner membrane. In terms of biological role, involved in protein precursor import into chloroplasts. May be part of an intermediate translocation complex acting as a protein-conducting channel at the inner envelope. This chain is Protein TIC 214, found in Ipomoea purpurea (Common morning glory).